Consider the following 419-residue polypeptide: G protein-activated inward rectifier potassium channel 4 (419 aa).

At 1-86 the chain is on the cytoplasmic side; the sequence is MAGDSRNAMN…LFTTLVDLKW (86 aa). Ser-5 carries the phosphoserine modification. A helical transmembrane segment spans residues 87 to 111; the sequence is RFNLLVFTMVYTITWLFFGFIWWLI. The Extracellular segment spans residues 112 to 135; the sequence is AYVRGDLDHVGDQEWIPCVENLSG. The segment at residues 136-147 is an intramembrane region (helical; Pore-forming); that stretch reads FVSAFLFSIETE. An intramembrane region (pore-forming) is located at residues 148–154; the sequence is TTIGYGF. A Selectivity filter motif is present at residues 149–154; the sequence is TIGYGF. The Extracellular segment spans residues 155-163; that stretch reads RVITEKCPE. A helical membrane pass occupies residues 164-185; the sequence is GIILLLVQAILGSIVNAFMVGC. The Cytoplasmic portion of the chain corresponds to 186–419; sequence MFVKISQPKK…SVSQATRGSM (234 aa). The disordered stretch occupies residues 388 to 419; the sequence is GCAEAGNEAEAEKDEEGEPNGLSVSQATRGSM. A compositionally biased stretch (acidic residues) spans 394-405; the sequence is NEAEAEKDEEGE. Polar residues predominate over residues 409–419; sequence LSVSQATRGSM.

Belongs to the inward rectifier-type potassium channel (TC 1.A.2.1) family. KCNJ5 subfamily. As to quaternary structure, associates with KCNJ3/GIRK1 to form a G-protein-activated heteromultimer pore-forming unit. Associates with KCNJ6/GRIK2 to form a G-protein-activated heteromultimer pore-forming unit. As to expression, expressed in the heart.

Its subcellular location is the membrane. It catalyses the reaction K(+)(in) = K(+)(out). With respect to regulation, heteromultimer composed of KCNJ3/GIRK1 and KCNJ5/GIRK4 is activated by phosphatidylinositol 4,5 biphosphate (PtdIns(4,5)P2). In terms of biological role, inward rectifier potassium channels are characterized by a greater tendency to allow potassium to flow into the cell rather than out of it. Their voltage dependence is regulated by the concentration of extracellular potassium; as external potassium is raised, the voltage range of the channel opening shifts to more positive voltages. The inward rectification is mainly due to the blockage of outward current by internal magnesium. Can be blocked by external barium. This potassium channel is controlled by G proteins. Forms a functional channel in association with KCNJ3/GIRK1. The protein is G protein-activated inward rectifier potassium channel 4 (Kcnj5) of Mus musculus (Mouse).